A 925-amino-acid polypeptide reads, in one-letter code: NADH:fumarate oxidoreductase (925 aa).

Position 447 is an FMN phosphoryl threonine (threonine 447). FAD contacts are provided by alanine 492, glutamate 511, asparagine 519, threonine 520, alanine 525, glycine 526, and valine 633. Alanine 525 contacts fumarate. Alanine 525 contributes to the succinate binding site. Succinate contacts are provided by histidine 719, serine 731, and glutamate 732. The fumarate site is built by serine 731 and glutamate 732. The active-site Proton donor is arginine 756. Residue histidine 859 coordinates fumarate. Histidine 859 is a binding site for succinate. FAD is bound by residues histidine 860 and glutamate 889. Residues arginine 899 and glycine 902 each contribute to the fumarate site. Succinate contacts are provided by arginine 899 and glycine 902. FAD is bound by residues alanine 904 and valine 905.

It belongs to the FAD-dependent oxidoreductase 2 family. FRD/SDH subfamily. Monomer. Requires FAD as cofactor. FMN serves as cofactor. Post-translationally, is flavinylated on Thr-447 by ApbE2, encoded in a neighboring gene. Flavinylation is essential for catalytic activity.

It localises to the cytoplasm. It catalyses the reaction succinate + NAD(+) = fumarate + NADH + H(+). In terms of biological role, catalyzes the anaerobic reduction of fumarate to succinate. Uses NADH as the inherent electron donor in this process. Is involved in anaerobic fumarate respiration in K.pneumoniae. This Klebsiella pneumoniae (strain 342) protein is NADH:fumarate oxidoreductase.